Reading from the N-terminus, the 545-residue chain is CTP synthase (545 aa).

An amidoligase domain region spans residues 1–266 (MTTNYIFVTG…DDYICKRFSL (266 aa)). Ser14 is a CTP binding site. Ser14 serves as a coordination point for UTP. Residues 15–20 (SLGKGI) and Asp72 each bind ATP. Mg(2+) is bound by residues Asp72 and Glu140. CTP contacts are provided by residues 147-149 (DIE), 187-192 (KTKPTQ), and Lys223. UTP-binding positions include 187-192 (KTKPTQ) and Lys223. 239–241 (KDV) lines the ATP pocket. A Glutamine amidotransferase type-1 domain is found at 291 to 542 (TIGMVGKYIE…VKAASEFQKR (252 aa)). Gly352 contributes to the L-glutamine binding site. Cys379 (nucleophile; for glutamine hydrolysis) is an active-site residue. Residues 380–383 (LGMQ), Glu403, and Arg470 contribute to the L-glutamine site. Residues His515 and Glu517 contribute to the active site.

It belongs to the CTP synthase family. Homotetramer.

It carries out the reaction UTP + L-glutamine + ATP + H2O = CTP + L-glutamate + ADP + phosphate + 2 H(+). It catalyses the reaction L-glutamine + H2O = L-glutamate + NH4(+). The catalysed reaction is UTP + NH4(+) + ATP = CTP + ADP + phosphate + 2 H(+). The protein operates within pyrimidine metabolism; CTP biosynthesis via de novo pathway; CTP from UDP: step 2/2. With respect to regulation, allosterically activated by GTP, when glutamine is the substrate; GTP has no effect on the reaction when ammonia is the substrate. The allosteric effector GTP functions by stabilizing the protein conformation that binds the tetrahedral intermediate(s) formed during glutamine hydrolysis. Inhibited by the product CTP, via allosteric rather than competitive inhibition. In terms of biological role, catalyzes the ATP-dependent amination of UTP to CTP with either L-glutamine or ammonia as the source of nitrogen. Regulates intracellular CTP levels through interactions with the four ribonucleotide triphosphates. In Shigella boydii serotype 18 (strain CDC 3083-94 / BS512), this protein is CTP synthase.